A 560-amino-acid polypeptide reads, in one-letter code: Alpha-keto-acid decarboxylase (560 aa).

A thiamine diphosphate-binding site is contributed by glutamate 61. Residues 396–478 (TSFYGMADHR…VVVNNDGYTV (83 aa)) form a thiamine pyrophosphate binding region. Aspartate 446, asparagine 473, and glycine 475 together coordinate Mg(2+).

It belongs to the TPP enzyme family. It depends on a metal cation as a cofactor. The cofactor is thiamine diphosphate.

Its function is as follows. Decarboxylates branched-chain and aromatic alpha-keto acids to aldehydes. The sequence is that of Alpha-keto-acid decarboxylase (kdc) from Mycobacterium bovis (strain ATCC BAA-935 / AF2122/97).